The primary structure comprises 143 residues: Ribosome-binding factor A (143 aa).

The disordered stretch occupies residues 123–143 (VRAQAAQAKPAGEANPYKERN). The span at 124–136 (RAQAAQAKPAGEA) shows a compositional bias: low complexity.

The protein belongs to the RbfA family. As to quaternary structure, monomer. Binds 30S ribosomal subunits, but not 50S ribosomal subunits or 70S ribosomes.

The protein resides in the cytoplasm. In terms of biological role, one of several proteins that assist in the late maturation steps of the functional core of the 30S ribosomal subunit. Associates with free 30S ribosomal subunits (but not with 30S subunits that are part of 70S ribosomes or polysomes). Required for efficient processing of 16S rRNA. May interact with the 5'-terminal helix region of 16S rRNA. This chain is Ribosome-binding factor A, found in Corynebacterium urealyticum (strain ATCC 43042 / DSM 7109).